The chain runs to 466 residues: Ribosomal protein uS12 methylthiotransferase RimO (466 aa).

The MTTase N-terminal domain occupies Pro18–Pro133. Residues Cys27, Cys63, Cys92, Cys164, Cys168, and Cys171 each coordinate [4Fe-4S] cluster. A Radical SAM core domain is found at Leu150–Ala391. The region spanning Gln394–Ile466 is the TRAM domain.

The protein belongs to the methylthiotransferase family. RimO subfamily. It depends on [4Fe-4S] cluster as a cofactor.

The protein resides in the cytoplasm. It carries out the reaction L-aspartate(89)-[ribosomal protein uS12]-hydrogen + (sulfur carrier)-SH + AH2 + 2 S-adenosyl-L-methionine = 3-methylsulfanyl-L-aspartate(89)-[ribosomal protein uS12]-hydrogen + (sulfur carrier)-H + 5'-deoxyadenosine + L-methionine + A + S-adenosyl-L-homocysteine + 2 H(+). In terms of biological role, catalyzes the methylthiolation of an aspartic acid residue of ribosomal protein uS12. This chain is Ribosomal protein uS12 methylthiotransferase RimO, found in Leptothrix cholodnii (strain ATCC 51168 / LMG 8142 / SP-6) (Leptothrix discophora (strain SP-6)).